The primary structure comprises 201 residues: LexA repressor 1 (201 aa).

The segment at residues 27–47 (LAEIAQAFGFASRNAAQKHVQ) is a DNA-binding region (H-T-H motif). Catalysis depends on for autocatalytic cleavage activity residues S122 and K159.

Belongs to the peptidase S24 family. Homodimer.

It carries out the reaction Hydrolysis of Ala-|-Gly bond in repressor LexA.. Its function is as follows. Represses a number of genes involved in the response to DNA damage (SOS response), including recA and lexA. In the presence of single-stranded DNA, RecA interacts with LexA causing an autocatalytic cleavage which disrupts the DNA-binding part of LexA, leading to derepression of the SOS regulon and eventually DNA repair. The protein is LexA repressor 1 of Xanthomonas oryzae pv. oryzae (strain KACC10331 / KXO85).